The primary structure comprises 247 residues: 5'-nucleotidase SurE (247 aa).

Residues Asp8, Asp9, Ser39, and Asn91 each coordinate a divalent metal cation.

The protein belongs to the SurE nucleotidase family. It depends on a divalent metal cation as a cofactor.

It localises to the cytoplasm. The catalysed reaction is a ribonucleoside 5'-phosphate + H2O = a ribonucleoside + phosphate. In terms of biological role, nucleotidase that shows phosphatase activity on nucleoside 5'-monophosphates. The protein is 5'-nucleotidase SurE of Chromobacterium violaceum (strain ATCC 12472 / DSM 30191 / JCM 1249 / CCUG 213 / NBRC 12614 / NCIMB 9131 / NCTC 9757 / MK).